Here is a 301-residue protein sequence, read N- to C-terminus: Cutinase (301 aa).

The first 40 residues, 1 to 40, serve as a signal peptide directing secretion; that stretch reads MAVMTPRRERSSLLSRALQVTAAAATALVTAVSLAAPAHA. A poly(ethylene terephthalate)-binding site is contributed by Tyr-100. The active-site Nucleophile is the Ser-170. Poly(ethylene terephthalate) contacts are provided by Met-171 and Trp-195. Active-site charge relay system residues include Asp-216 and His-248. Cysteines 281 and 299 form a disulfide.

The protein belongs to the AB hydrolase superfamily.

The protein resides in the secreted. It is found in the periplasm. It catalyses the reaction a butanoate ester + H2O = an aliphatic alcohol + butanoate + H(+). It carries out the reaction (ethylene terephthalate)(n) + H2O = (ethylene terephthalate)(n-1) + 4-[(2-hydroxyethoxy)carbonyl]benzoate + H(+). The enzyme catalyses cutin + H2O = cutin monomers.. With respect to regulation, activated by magnesium ions. Activated by calcium ions. Inhibited by the serine hydrolase inhibitor phenylmethanesulfonyl fluoride (PMSF). Catalyzes the hydrolysis of cutin, a polyester that forms the structure of plant cuticle. Shows esterase activity towards p-nitrophenol-linked aliphatic esters (pNP-aliphatic esters). Also hydrolyzes the triglyceride triolein. Capable of degrading the plastic poly(ethylene terephthalate) (PET), the most abundant polyester plastic in the world. This is Cutinase from Thermobifida fusca (strain YX).